Reading from the N-terminus, the 397-residue chain is Chorismate synthase (397 aa).

Positions 40 and 46 each coordinate NADP(+). FMN contacts are provided by residues 129–131 (RSS), 257–258 (QA), G302, 317–321 (KPISS), and R343.

This sequence belongs to the chorismate synthase family. As to quaternary structure, homotetramer. The cofactor is FMNH2.

It carries out the reaction 5-O-(1-carboxyvinyl)-3-phosphoshikimate = chorismate + phosphate. Its pathway is metabolic intermediate biosynthesis; chorismate biosynthesis; chorismate from D-erythrose 4-phosphate and phosphoenolpyruvate: step 7/7. Its function is as follows. Catalyzes the anti-1,4-elimination of the C-3 phosphate and the C-6 proR hydrogen from 5-enolpyruvylshikimate-3-phosphate (EPSP) to yield chorismate, which is the branch point compound that serves as the starting substrate for the three terminal pathways of aromatic amino acid biosynthesis. This reaction introduces a second double bond into the aromatic ring system. This Chlorobaculum tepidum (strain ATCC 49652 / DSM 12025 / NBRC 103806 / TLS) (Chlorobium tepidum) protein is Chorismate synthase.